Consider the following 343-residue polypeptide: Holliday junction branch migration complex subunit RuvB (343 aa).

A large ATPase domain (RuvB-L) region spans residues 4–184 (SDRLISAKAG…FGIVQRLEFY (181 aa)). ATP is bound by residues isoleucine 23, arginine 24, glycine 65, lysine 68, threonine 69, threonine 70, 131–133 (EDY), arginine 174, tyrosine 184, and arginine 221. A Mg(2+)-binding site is contributed by threonine 69. The segment at 185–255 (NHQDLTHIIT…IADQALNMLK (71 aa)) is small ATPAse domain (RuvB-S). A head domain (RuvB-H) region spans residues 258–343 (SQGFDHMDRR…RSGREDDLFE (86 aa)). Positions 294, 313, and 318 each coordinate DNA.

It belongs to the RuvB family. As to quaternary structure, homohexamer. Forms an RuvA(8)-RuvB(12)-Holliday junction (HJ) complex. HJ DNA is sandwiched between 2 RuvA tetramers; dsDNA enters through RuvA and exits via RuvB. An RuvB hexamer assembles on each DNA strand where it exits the tetramer. Each RuvB hexamer is contacted by two RuvA subunits (via domain III) on 2 adjacent RuvB subunits; this complex drives branch migration. In the full resolvosome a probable DNA-RuvA(4)-RuvB(12)-RuvC(2) complex forms which resolves the HJ.

It is found in the cytoplasm. It carries out the reaction ATP + H2O = ADP + phosphate + H(+). Its function is as follows. The RuvA-RuvB-RuvC complex processes Holliday junction (HJ) DNA during genetic recombination and DNA repair, while the RuvA-RuvB complex plays an important role in the rescue of blocked DNA replication forks via replication fork reversal (RFR). RuvA specifically binds to HJ cruciform DNA, conferring on it an open structure. The RuvB hexamer acts as an ATP-dependent pump, pulling dsDNA into and through the RuvAB complex. RuvB forms 2 homohexamers on either side of HJ DNA bound by 1 or 2 RuvA tetramers; 4 subunits per hexamer contact DNA at a time. Coordinated motions by a converter formed by DNA-disengaged RuvB subunits stimulates ATP hydrolysis and nucleotide exchange. Immobilization of the converter enables RuvB to convert the ATP-contained energy into a lever motion, pulling 2 nucleotides of DNA out of the RuvA tetramer per ATP hydrolyzed, thus driving DNA branch migration. The RuvB motors rotate together with the DNA substrate, which together with the progressing nucleotide cycle form the mechanistic basis for DNA recombination by continuous HJ branch migration. Branch migration allows RuvC to scan DNA until it finds its consensus sequence, where it cleaves and resolves cruciform DNA. The chain is Holliday junction branch migration complex subunit RuvB from Marinobacter nauticus (strain ATCC 700491 / DSM 11845 / VT8) (Marinobacter aquaeolei).